A 1380-amino-acid chain; its full sequence is DNA-directed RNA polymerase subunit beta (1380 aa).

The protein belongs to the RNA polymerase beta chain family. As to quaternary structure, the RNAP catalytic core consists of 2 alpha, 1 beta, 1 beta' and 1 omega subunit. When a sigma factor is associated with the core the holoenzyme is formed, which can initiate transcription.

The enzyme catalyses RNA(n) + a ribonucleoside 5'-triphosphate = RNA(n+1) + diphosphate. DNA-dependent RNA polymerase catalyzes the transcription of DNA into RNA using the four ribonucleoside triphosphates as substrates. This is DNA-directed RNA polymerase subunit beta from Ehrlichia canis (strain Jake).